The chain runs to 638 residues: CTTNBP2 N-terminal-like protein (638 aa).

Residues 87–284 (MKQCKNMQER…KDLEAAQQHR (198 aa)) are a coiled coil. 4 disordered regions span residues 280 to 303 (AQQHRSTSEQGREPVTMSRGTATE), 360 to 430 (RELT…PCSS), 463 to 490 (RHKFQSQADQDQQASGLQSPPSRDLSPT), and 514 to 621 (NQGP…CSPS). Serine 285 carries the phosphoserine modification. Residues 360 to 371 (RELTSDSSTENQ) show a composition bias toward polar residues. Low complexity-rich tracts occupy residues 401–430 (TMPSHLPSSGSSLSPSSTASSSLTSSPCSS) and 467–477 (QSQADQDQQAS). Phosphoserine is present on residues serine 481, serine 488, serine 522, serine 526, serine 559, serine 562, and serine 567. Over residues 514–528 (NQGPIKPVSPNSSPF) the composition is skewed to polar residues. A phosphothreonine mark is found at threonine 569 and threonine 589. Positions 589-620 (TPSQSATTPVTKTHSQASSLAATEDLASSCSP) are enriched in polar residues. Residue serine 591 is modified to Phosphoserine.

Interacts with CTTN/cortactin; this interaction may redistribute CTTN to stress fibers. May form homomers. Associates with the core of STRIPAK complexes composed of PP2A catalytic and scaffolding subunits, the striatins (PP2A regulatory subunits), the striatin-associated proteins MOB4, STRIP1 and STRIP2, PDCD10 and members of the STE20 kinases, such as STK24 and STK26. In terms of tissue distribution, predominantly expressed in skin, also detectable in spleen and lung (at protein level). Very low levels, if any, in brain (at protein level).

It is found in the cell projection. Its subcellular location is the lamellipodium. The protein resides in the cytoplasm. It localises to the cytoskeleton. The protein localises to the stress fiber. Functionally, regulates lamellipodial actin dynamics in a CTTN-dependent manner. Associates with core striatin-interacting phosphatase and kinase (STRIPAK) complex to form CTTNBP2NL-STRIPAK complexes. STRIPAK complexes have critical roles in protein (de)phosphorylation and are regulators of multiple signaling pathways including Hippo, MAPK, nuclear receptor and cytoskeleton remodeling. Different types of STRIPAK complexes are involved in a variety of biological processes such as cell growth, differentiation, apoptosis, metabolism and immune regulation. The chain is CTTNBP2 N-terminal-like protein (Cttnbp2nl) from Mus musculus (Mouse).